A 457-amino-acid polypeptide reads, in one-letter code: Bifunctional protein GlmU (457 aa).

The interval 1–230 (MSKRYAVVLA…FEESLGVNDR (230 aa)) is pyrophosphorylase. Residues 9–12 (LAAG), Lys23, Gln73, and 78–79 (GT) each bind UDP-N-acetyl-alpha-D-glucosamine. Asp103 provides a ligand contact to Mg(2+). UDP-N-acetyl-alpha-D-glucosamine-binding residues include Gly140, Glu155, Asn170, and Asn228. Asn228 provides a ligand contact to Mg(2+). The tract at residues 231-251 (IALAEASKLMQRRINENHMRN) is linker. The N-acetyltransferase stretch occupies residues 252 to 457 (GVTLVNPENT…GYAKHLNHGK (206 aa)). Arg333 and Lys351 together coordinate UDP-N-acetyl-alpha-D-glucosamine. His363 acts as the Proton acceptor in catalysis. UDP-N-acetyl-alpha-D-glucosamine contacts are provided by Tyr366 and Asn377. Acetyl-CoA contacts are provided by residues 386–387 (NY), Ala423, and Arg440.

This sequence in the N-terminal section; belongs to the N-acetylglucosamine-1-phosphate uridyltransferase family. The protein in the C-terminal section; belongs to the transferase hexapeptide repeat family. Homotrimer. It depends on Mg(2+) as a cofactor.

It is found in the cytoplasm. It carries out the reaction alpha-D-glucosamine 1-phosphate + acetyl-CoA = N-acetyl-alpha-D-glucosamine 1-phosphate + CoA + H(+). The catalysed reaction is N-acetyl-alpha-D-glucosamine 1-phosphate + UTP + H(+) = UDP-N-acetyl-alpha-D-glucosamine + diphosphate. Its pathway is nucleotide-sugar biosynthesis; UDP-N-acetyl-alpha-D-glucosamine biosynthesis; N-acetyl-alpha-D-glucosamine 1-phosphate from alpha-D-glucosamine 6-phosphate (route II): step 2/2. The protein operates within nucleotide-sugar biosynthesis; UDP-N-acetyl-alpha-D-glucosamine biosynthesis; UDP-N-acetyl-alpha-D-glucosamine from N-acetyl-alpha-D-glucosamine 1-phosphate: step 1/1. It functions in the pathway bacterial outer membrane biogenesis; LPS lipid A biosynthesis. Its function is as follows. Catalyzes the last two sequential reactions in the de novo biosynthetic pathway for UDP-N-acetylglucosamine (UDP-GlcNAc). The C-terminal domain catalyzes the transfer of acetyl group from acetyl coenzyme A to glucosamine-1-phosphate (GlcN-1-P) to produce N-acetylglucosamine-1-phosphate (GlcNAc-1-P), which is converted into UDP-GlcNAc by the transfer of uridine 5-monophosphate (from uridine 5-triphosphate), a reaction catalyzed by the N-terminal domain. The protein is Bifunctional protein GlmU of Listeria innocua serovar 6a (strain ATCC BAA-680 / CLIP 11262).